Consider the following 1997-residue polypeptide: Receptor-type tyrosine-protein phosphatase beta (1997 aa).

An N-terminal signal peptide occupies residues 1-22 (MLSHGAGLALWITLSLLQTGLA). 17 Fibronectin type-III domains span residues 23–111 (EPER…TDPL), 112–207 (PPAR…SPVK), 203–288 (PSPV…VRTA), 291–378 (EVSN…TFPD), 379–471 (KVAN…LAVL), 467–552 (PLAV…KGRT), 556–641 (QVTD…EGRT), 642–729 (VPSS…QERT), 730–829 (VPDK…TLRN), 819–906 (PEPV…GFTV), 909–1001 (AVKN…VQGV), 995–1083 (PASV…EGRT), 1087–1175 (AVTD…VPAS), 1173–1260 (PASV…SRTA), 1260–1356 (APSP…TKPD), 1357–1448 (KIQN…IDRP), and 1458–1554 (NEKD…EMES). Residues 23–1621 (EPERCNFTLA…ESEPLFGAIE (1599 aa)) are Extracellular-facing. N-linked (GlcNAc...) asparagine glycans are attached at residues Asn28, Asn53, Asn75, Asn172, Asn198, Asn267, Asn321, Asn414, Asn421, Asn479, Asn544, Asn574, Asn598, Asn652, Asn721, and Asn829. Asn1040, Asn1096, Asn1163, Asn1185, Asn1212, Asn1274, Asn1367, Asn1470, Asn1474, and Asn1518 each carry an N-linked (GlcNAc...) asparagine glycan. A helical transmembrane segment spans residues 1622–1642 (GVSAGLFLIGMLVAVVALLIC). The Cytoplasmic portion of the chain corresponds to 1643 to 1997 (RQKVSHGRER…YHRDPVYSRH (355 aa)). One can recognise a Tyrosine-protein phosphatase domain in the interval 1703 to 1963 (LSKEYEELKD…VYLHQCVRDV (261 aa)). Substrate is bound by residues Asp1870, 1904-1910 (CSAGVGR), and Gln1948. Cys1904 serves as the catalytic Phosphocysteine intermediate. Phosphotyrosine is present on Tyr1981.

It belongs to the protein-tyrosine phosphatase family. Receptor class 3 subfamily. In terms of assembly, monomer. Interacts with TEK. Interacts via fibronectin type-III 17 domain with CDH5. Detected in a complex with CNTN1 and NRCAM. Interacts (phosphorylated form) with FYN and GRB2. Interacts with IGFBP2.

It is found in the membrane. The catalysed reaction is O-phospho-L-tyrosyl-[protein] + H2O = L-tyrosyl-[protein] + phosphate. Plays an important role in blood vessel remodeling and angiogenesis. Not necessary for the initial formation of blood vessels, but is essential for their maintenance and remodeling. Can induce dephosphorylation of TEK/TIE2, CDH5/VE-cadherin and KDR/VEGFR-2. Regulates angiopoietin-TIE2 signaling in endothelial cells. Acts as a negative regulator of TIE2, and controls TIE2 driven endothelial cell proliferation, which in turn affects blood vessel remodeling during embryonic development and determines blood vessel size during perinatal growth. Essential for the maintenance of endothelial cell contact integrity and for the adhesive function of VE-cadherin in endothelial cells and this requires the presence of plakoglobin. The sequence is that of Receptor-type tyrosine-protein phosphatase beta (PTPRB) from Homo sapiens (Human).